A 721-amino-acid chain; its full sequence is Ophiobolin F synthase oblA (721 aa).

Residues 5–325 (YDQPYSVLLD…RYNLKAEWNE (321 aa)) are (7Z)-ophiobola-7,19-dien-3-ol synthase. 2 residues coordinate Mg(2+): aspartate 97 and aspartate 101. Residue aspartate 97 coordinates substrate. The DDXXD 1 motif lies at 97–101 (DDVID). Residues 185 to 188 (RSLD), asparagine 229, 233 to 237 (SFEKE), and 316 to 317 (RY) contribute to the substrate site. Positions 229-237 (NDLFSFEKE) match the NSE/DTE motif. The interval 326 to 721 (LQMLRAKHGV…LRLMMEMLKV (396 aa)) is geranylfarnesyl diphosphate synthase. Positions 348 to 387 (SMDHIWKKGSTQGESKGEKRKRQSVNGTNGVNGTNGVKKP) are disordered. The span at 372–384 (VNGTNGVNGTNGV) shows a compositional bias: low complexity. Positions 432, 435, and 464 each coordinate isopentenyl diphosphate. Residues aspartate 471 and aspartate 475 each coordinate Mg(2+). Positions 471 to 475 (DDLED) match the DDXXD 2 motif. Arginine 480 is a binding site for dimethylallyl diphosphate. Position 481 (arginine 481) interacts with isopentenyl diphosphate. Positions 558, 559, 597, 604, 614, and 624 each coordinate dimethylallyl diphosphate.

It in the N-terminal section; belongs to the terpene synthase family. The protein in the C-terminal section; belongs to the FPP/GGPP synthase family. Mg(2+) serves as cofactor.

The catalysed reaction is isopentenyl diphosphate + (2E,6E)-farnesyl diphosphate = (2E,6E,10E)-geranylgeranyl diphosphate + diphosphate. It catalyses the reaction isopentenyl diphosphate + (2E,6E,10E)-geranylgeranyl diphosphate = (2E,6E,10E,14E)-geranylfarnesyl diphosphate + diphosphate. It carries out the reaction (2E,6E,10E,14E)-geranylfarnesyl diphosphate + H2O = ophiobolin F + diphosphate. Its pathway is secondary metabolite biosynthesis; terpenoid biosynthesis. Functionally, bifunctional sesterterpene synthase; part of the gene cluster that mediates the biosynthesis of the sesterterpenes ophiobolins, fungal phytotoxins with potential anti-cancer activities. The first step of the pathway is performed by the sesterterpene synthase oblA that possesses both prenyl transferase and terpene cyclase activity, converting isopentenyl diphosphate and dimethylallyl diphosphate into geranylfarnesyl diphosphate (GFPP) and further converting GFPP into ophiobolin F, respectively. Other sesterterpenoids (C(25) terpenoids) are found as minor products of oblA. The cytochrome P450 monooxygenase oblB then catalyzes a four-step oxidative transformation of ophiobolin F to yield ophiobolin C. The FAD-dependent oxidoreductase oblC might be involved in a later oxidation step that produces ophiobolin A. This chain is Ophiobolin F synthase oblA, found in Cochliobolus heterostrophus (strain C5 / ATCC 48332 / race O) (Southern corn leaf blight fungus).